The chain runs to 380 residues: Succinyl-diaminopimelate desuccinylase (380 aa).

Residue histidine 69 coordinates Zn(2+). Aspartate 71 is an active-site residue. Aspartate 102 serves as a coordination point for Zn(2+). The Proton acceptor role is filled by glutamate 135. The Zn(2+) site is built by glutamate 136, glutamate 164, and histidine 353.

The protein belongs to the peptidase M20A family. DapE subfamily. As to quaternary structure, homodimer. Zn(2+) serves as cofactor. Requires Co(2+) as cofactor.

The enzyme catalyses N-succinyl-(2S,6S)-2,6-diaminopimelate + H2O = (2S,6S)-2,6-diaminopimelate + succinate. The protein operates within amino-acid biosynthesis; L-lysine biosynthesis via DAP pathway; LL-2,6-diaminopimelate from (S)-tetrahydrodipicolinate (succinylase route): step 3/3. In terms of biological role, catalyzes the hydrolysis of N-succinyl-L,L-diaminopimelic acid (SDAP), forming succinate and LL-2,6-diaminopimelate (DAP), an intermediate involved in the bacterial biosynthesis of lysine and meso-diaminopimelic acid, an essential component of bacterial cell walls. This Phenylobacterium zucineum (strain HLK1) protein is Succinyl-diaminopimelate desuccinylase.